The primary structure comprises 316 residues: tRNA dimethylallyltransferase (316 aa).

17–24 (GPTASGKT) serves as a coordination point for ATP. Position 19–24 (19–24 (TASGKT)) interacts with substrate. 3 interaction with substrate tRNA regions span residues 42 to 45 (DSAL), 166 to 170 (QRLSR), and 247 to 252 (RCVGYR).

This sequence belongs to the IPP transferase family. In terms of assembly, monomer. Requires Mg(2+) as cofactor.

It carries out the reaction adenosine(37) in tRNA + dimethylallyl diphosphate = N(6)-dimethylallyladenosine(37) in tRNA + diphosphate. Catalyzes the transfer of a dimethylallyl group onto the adenine at position 37 in tRNAs that read codons beginning with uridine, leading to the formation of N6-(dimethylallyl)adenosine (i(6)A). This is tRNA dimethylallyltransferase from Citrobacter koseri (strain ATCC BAA-895 / CDC 4225-83 / SGSC4696).